We begin with the raw amino-acid sequence, 115 residues long: Non-specific lipid-transfer protein 4.1 (115 aa).

The first 25 residues, methionine 1–alanine 25, serve as a signal peptide directing secretion. Intrachain disulfides connect cysteine 29–cysteine 77, cysteine 39–cysteine 54, cysteine 55–cysteine 97, and cysteine 75–cysteine 111.

Belongs to the plant LTP family.

Plant non-specific lipid-transfer proteins transfer phospholipids as well as galactolipids across membranes. May play a role in wax or cutin deposition in the cell walls of expanding epidermal cells and certain secretory tissues. The protein is Non-specific lipid-transfer protein 4.1 (LTP4.1) of Hordeum vulgare (Barley).